Reading from the N-terminus, the 194-residue chain is Peptidyl-tRNA hydrolase (194 aa).

Position 17 (Tyr17) interacts with tRNA. His22 (proton acceptor) is an active-site residue. TRNA contacts are provided by Tyr68, Asn70, and Asn116.

This sequence belongs to the PTH family. In terms of assembly, monomer.

The protein localises to the cytoplasm. The enzyme catalyses an N-acyl-L-alpha-aminoacyl-tRNA + H2O = an N-acyl-L-amino acid + a tRNA + H(+). In terms of biological role, hydrolyzes ribosome-free peptidyl-tRNAs (with 1 or more amino acids incorporated), which drop off the ribosome during protein synthesis, or as a result of ribosome stalling. Functionally, catalyzes the release of premature peptidyl moieties from peptidyl-tRNA molecules trapped in stalled 50S ribosomal subunits, and thus maintains levels of free tRNAs and 50S ribosomes. This is Peptidyl-tRNA hydrolase from Pseudomonas fluorescens (strain ATCC BAA-477 / NRRL B-23932 / Pf-5).